The chain runs to 199 residues: Probable V-type proton ATPase 20 kDa proteolipid subunit (199 aa).

Topologically, residues M1–L3 are vacuolar. A helical transmembrane segment spans residues F4–F24. Residues H25–G46 lie on the Cytoplasmic side of the membrane. A helical transmembrane segment spans residues L47–I67. Residues C68 to N86 are Vacuolar-facing. Residues L87–F107 traverse the membrane as a helical segment. Residues S108–A130 are Cytoplasmic-facing. A helical membrane pass occupies residues L131–I151. The Vacuolar segment spans residues T152–V170. Residues L171–I191 traverse the membrane as a helical segment. The Cytoplasmic portion of the chain corresponds to G192 to S199.

It belongs to the V-ATPase proteolipid subunit family. In terms of assembly, V-ATPase is a heteromultimeric enzyme composed of a peripheral catalytic V1 complex (components A to H) attached to an integral membrane V0 proton pore complex (components: a, c, c', c'', d, e, f and VOA1). The decameric c-ring forms the proton-conducting pore, and is composed of eight proteolipid subunits c, one subunit c' and one subunit c''.

Its subcellular location is the vacuole membrane. In terms of biological role, proton-conducting pore forming subunit of the V0 complex of vacuolar(H+)-ATPase (V-ATPase), a multisubunit enzyme composed of a peripheral complex (V1) that hydrolyzes ATP and a membrane integral complex (V0) that translocates protons. V-ATPase is responsible for acidifying and maintaining the pH of intracellular compartments. The chain is Probable V-type proton ATPase 20 kDa proteolipid subunit (vma16) from Schizosaccharomyces pombe (strain 972 / ATCC 24843) (Fission yeast).